The chain runs to 1134 residues: Protocadherin-18 (1134 aa).

A signal peptide spans 1–27 (MYQMNAKMHFTFVFALLVVSFNLDVLG). Cadherin domains lie at 28–137 (KNLK…SPQF), 138–246 (SRSL…SPAF), 247–354 (EQQS…KPEI), 361–465 (PGKE…PPHF), 466–576 (QRSR…VPVV), and 582–697 (RNNT…APLD). The Extracellular segment spans residues 28–699 (KNLKYRIYEE…SVSQAPLDVS (672 aa)). Asn-103 carries an N-linked (GlcNAc...) asparagine glycan. N-linked (GlcNAc...) asparagine glycosylation occurs at Asn-269. Residue Asn-559 is glycosylated (N-linked (GlcNAc...) asparagine). Residues 700-720 (MIIIISLGAICAVLLVIMVLF) traverse the membrane as a helical segment. The Cytoplasmic segment spans residues 721-1134 (ATRCNREKKD…NKLLQDVRQS (414 aa)). Disordered stretches follow at residues 768-800 (TLPI…NSHQ), 868-888 (SLKD…DLGR), and 941-1003 (DYRS…TSSL). Residues 791-800 (GSRQSHNSHQ) are compositionally biased toward polar residues. Positions 868 to 877 (SLKDSGRGDS) are enriched in basic and acidic residues. The tract at residues 892–1134 (IDRLLGEGFS…NKLLQDVRQS (243 aa)) is interaction with DAB1.

As to quaternary structure, interacts with DAB1.

The protein localises to the cell membrane. In terms of biological role, potential calcium-dependent cell-adhesion protein. The protein is Protocadherin-18 (PCDH18) of Bos taurus (Bovine).